Here is a 325-residue protein sequence, read N- to C-terminus: Homocysteine S-methyltransferase 2 (325 aa).

Residues 6–321 (LKQFLADNPK…KDIQEISAAV (316 aa)) enclose the Hcy-binding domain. Phosphothreonine is present on threonine 138. Residues cysteine 239, cysteine 306, and cysteine 307 each contribute to the Zn(2+) site.

It depends on Zn(2+) as a cofactor.

It localises to the cytoplasm. It is found in the nucleus. It carries out the reaction S-methyl-L-methionine + L-homocysteine = 2 L-methionine + H(+). Its function is as follows. Homocysteine S-methyltransferase involved in the conversion of S-adenosylmethionine (AdoMet) to methionine to control the methionine/AdoMet ratio. Also converts S-methylmethionine (SMM) to methionine. This is Homocysteine S-methyltransferase 2 (SAM4) from Saccharomyces cerevisiae (strain ATCC 204508 / S288c) (Baker's yeast).